Reading from the N-terminus, the 326-residue chain is MNFDETVPLSQRLEWSDVVPLTQDDGPNPVVPIAYKEEFRETMDYFRAIYFSDERSPRALRLTEETLLLNSGNYTVWHFRRLVLEALNHDLFEELEFIERIAEDNSKNYQLWHHRRWVAEKLGPDVAGRELEFTRRVLSLDAKHYHAWSHRQWTLRALGGWEDELDYCHELLEADVFNNSAWNQRYYVITQSPLLGGLEAMRESEVSYTIKAILTNPANESSWRYLKALYKDDKESWISDPSVSSVCLNVLSRTDCFHGFALSTLLDLLCDGLRPTNEHKDSVRALANEEPETNLANLVCTILGRVDPVRANYWAWRKSKITVAAI.

PFTA repeat units follow at residues 55–89, 90–124, 126–160, 161–194, and 201–235; these read RSPR…ALNH, DLFE…KLGP, VAGR…ALGG, WEDE…QSPL, and MRES…DDKE.

Belongs to the protein prenyltransferase subunit alpha family. Heterodimer of an alpha and a beta subunit. Mg(2+) serves as cofactor.

It carries out the reaction L-cysteinyl-[protein] + (2E,6E)-farnesyl diphosphate = S-(2E,6E)-farnesyl-L-cysteinyl-[protein] + diphosphate. The catalysed reaction is geranylgeranyl diphosphate + L-cysteinyl-[protein] = S-geranylgeranyl-L-cysteinyl-[protein] + diphosphate. In terms of biological role, essential subunit of both the farnesyltransferase and the geranylgeranyltransferase complex. Contributes to the transfer of a farnesyl or geranylgeranyl moiety from farnesyl or geranylgeranyl diphosphate to a cysteine at the fourth position from the C-terminus of several proteins having the C-terminal sequence Cys-aliphatic-aliphatic-X. The chain is Protein farnesyltransferase/geranylgeranyltransferase type-1 subunit alpha (FTA) from Arabidopsis thaliana (Mouse-ear cress).